The following is a 389-amino-acid chain: Phospho-N-acetylmuramoyl-pentapeptide-transferase (389 aa).

The next 10 membrane-spanning stretches (helical) occupy residues Arg25–Ile45, Thr73–Leu93, Phe97–Tyr117, Phe135–Ala155, Ile190–Ala210, Gly222–Met242, Ala259–Phe279, Phe287–Val307, Ile311–Val331, and Gln366–Leu386.

Belongs to the glycosyltransferase 4 family. MraY subfamily. The cofactor is Mg(2+).

Its subcellular location is the cell inner membrane. It carries out the reaction UDP-N-acetyl-alpha-D-muramoyl-L-alanyl-gamma-D-glutamyl-meso-2,6-diaminopimeloyl-D-alanyl-D-alanine + di-trans,octa-cis-undecaprenyl phosphate = di-trans,octa-cis-undecaprenyl diphospho-N-acetyl-alpha-D-muramoyl-L-alanyl-D-glutamyl-meso-2,6-diaminopimeloyl-D-alanyl-D-alanine + UMP. It participates in cell wall biogenesis; peptidoglycan biosynthesis. In terms of biological role, catalyzes the initial step of the lipid cycle reactions in the biosynthesis of the cell wall peptidoglycan: transfers peptidoglycan precursor phospho-MurNAc-pentapeptide from UDP-MurNAc-pentapeptide onto the lipid carrier undecaprenyl phosphate, yielding undecaprenyl-pyrophosphoryl-MurNAc-pentapeptide, known as lipid I. The chain is Phospho-N-acetylmuramoyl-pentapeptide-transferase from Paraburkholderia phytofirmans (strain DSM 17436 / LMG 22146 / PsJN) (Burkholderia phytofirmans).